A 603-amino-acid chain; its full sequence is MTDVPVSRIRNFSIIAHIDHGKSTLADRLLQDTGTVQQRQMKEQFLDNMDLERERGITIKLQAARMNYTAKDGEKYVLNLIDTPGHVDFSYEVSRSLAACEGALLVVDSSQGVEAQTLANVYLALDNNLEIIPILNKIDLPGSEPERVANEIEEVVGLDCSNIIKASAKAGIGIDEILESIVHLVPPPQDTVDQPLRALIFDSYYDAYRGVIVYFRVMDGQVKKGDRVRLMASGKEYEIDELGILSPNQIPIDSLHAGEVGYFAAAIKTVEDARVGDTITLAEKPAKEPLPGYTEANPMVFCGLFPTDADQYEDLREALEKLKLNDAALSYEPETSTAMGFGFRCGFLGLLHMEIVQERLEREYNLDLITTAPSVVYRVTTVDGEVTEIDNPSLLPPPQKREKIEEPYIQVEMITPETYVGTLMELCQSRRGVFKDMRYFTLSRTAVVYELPLAEVVTDFFDQLKSRSRGYASMEYHLIGYRENPLVKLDILVNGDSVDALAMIVHRDKAYYVGRALTEKLKELIPRHQFKVPIQAAIGSKVIASEHIPALRKDVLAKCYGGDISRKKKLLQKQAKGKKRMKSIGTVDVPQEAFMAVLKLDPQ.

The tr-type G domain maps to 7–189 (SRIRNFSIIA…SIVHLVPPPQ (183 aa)). GTP-binding positions include 19 to 24 (DHGKST) and 136 to 139 (NKID).

Belongs to the TRAFAC class translation factor GTPase superfamily. Classic translation factor GTPase family. LepA subfamily.

The protein resides in the cell inner membrane. The enzyme catalyses GTP + H2O = GDP + phosphate + H(+). Functionally, required for accurate and efficient protein synthesis under certain stress conditions. May act as a fidelity factor of the translation reaction, by catalyzing a one-codon backward translocation of tRNAs on improperly translocated ribosomes. Back-translocation proceeds from a post-translocation (POST) complex to a pre-translocation (PRE) complex, thus giving elongation factor G a second chance to translocate the tRNAs correctly. Binds to ribosomes in a GTP-dependent manner. This Rippkaea orientalis (strain PCC 8801 / RF-1) (Cyanothece sp. (strain PCC 8801)) protein is Elongation factor 4.